Consider the following 274-residue polypeptide: Large ribosomal subunit protein uL2 (274 aa).

Disordered regions lie at residues Lys28–His53 and Arg221–Lys274. Over residues Lys39–Arg48 the composition is skewed to low complexity. Over residues Lys253–Lys274 the composition is skewed to basic residues.

This sequence belongs to the universal ribosomal protein uL2 family. In terms of assembly, part of the 50S ribosomal subunit. Forms a bridge to the 30S subunit in the 70S ribosome.

One of the primary rRNA binding proteins. Required for association of the 30S and 50S subunits to form the 70S ribosome, for tRNA binding and peptide bond formation. It has been suggested to have peptidyltransferase activity; this is somewhat controversial. Makes several contacts with the 16S rRNA in the 70S ribosome. In Proteus mirabilis (strain HI4320), this protein is Large ribosomal subunit protein uL2.